We begin with the raw amino-acid sequence, 102 residues long: UPF0213 protein Ent638_3592 (102 aa).

One can recognise a GIY-YIG domain in the interval Val-4 to Arg-79.

The protein belongs to the UPF0213 family.

The chain is UPF0213 protein Ent638_3592 from Enterobacter sp. (strain 638).